Consider the following 488-residue polypeptide: N-succinylglutamate 5-semialdehyde dehydrogenase (488 aa).

Residue 221–226 (GSSRTG) participates in NAD(+) binding. Active-site residues include glutamate 244 and cysteine 278.

It belongs to the aldehyde dehydrogenase family. AstD subfamily.

The catalysed reaction is N-succinyl-L-glutamate 5-semialdehyde + NAD(+) + H2O = N-succinyl-L-glutamate + NADH + 2 H(+). The protein operates within amino-acid degradation; L-arginine degradation via AST pathway; L-glutamate and succinate from L-arginine: step 4/5. Functionally, catalyzes the NAD-dependent reduction of succinylglutamate semialdehyde into succinylglutamate. This chain is N-succinylglutamate 5-semialdehyde dehydrogenase, found in Pseudomonas syringae pv. syringae (strain B728a).